A 66-amino-acid chain; its full sequence is Cold shock-like protein CspD (66 aa).

A CSD domain is found at 4–63 (GKVKWFNSEKGFGFIEVEGGDDVFVHFSAIQGDGFKTLEEGQEVSFEIVEGNRGPQAANV).

Homodimer.

Its subcellular location is the cytoplasm. The polypeptide is Cold shock-like protein CspD (cspD) (Bacillus anthracis).